Reading from the N-terminus, the 153-residue chain is Bacteriohemerythrin (153 aa).

Fe cation-binding residues include H21, H57, E61, H76, H80, H115, and D120.

It belongs to the hemerythrin family. In terms of assembly, monomer.

Its function is as follows. Oxygen-binding protein. May be involved in a storage mechanism or for delivery to oxygen-requiring enzymes. The oxygen-binding site contains two iron atoms. In Pseudomonas paraeruginosa (strain DSM 24068 / PA7) (Pseudomonas aeruginosa (strain PA7)), this protein is Bacteriohemerythrin.